A 478-amino-acid chain; its full sequence is Violaxanthin de-epoxidase, chloroplastic (478 aa).

Residues 388 to 453 (LVERLEKKVE…RELSKEEMDV (66 aa)) adopt a coiled-coil conformation.

This sequence belongs to the calycin superfamily. Lipocalin family.

The protein localises to the plastid. Its subcellular location is the chloroplast thylakoid membrane. It catalyses the reaction all-trans-violaxanthin + 2 L-ascorbate = all-trans-zeaxanthin + 2 L-dehydroascorbate + 2 H2O. Functionally, part of the xanthophyll (or violaxanthin) cycle for controlling the concentration of zeaxanthin in chloroplasts. Catalyzes the two-step mono de-epoxidation reaction. Stereospecific for all-trans xanthophylls. Zeaxanthin induces the dissipation of excitation energy in the chlorophyll of the light-harvesting protein complex of photosystem II. The polypeptide is Violaxanthin de-epoxidase, chloroplastic (VDE1) (Nicotiana tabacum (Common tobacco)).